A 358-amino-acid chain; its full sequence is Trace amine-associated receptor 7a (358 aa).

Over 1-47 (MDKLVDNFLSGQSRTMSEDLLSASSPQLCYENLNGSCIRSPYSPGPR) the chain is Extracellular. Residue Asn34 is glycosylated (N-linked (GlcNAc...) asparagine). 2 disulfide bridges follow: Cys37-Cys201 and Cys120-Cys205. Residues 48–68 (LILYAVFGFGAVLAVCGNLLV) traverse the membrane as a helical segment. Residues 69–83 (MTSILHFRQLHSPAN) are Cytoplasmic-facing. A helical membrane pass occupies residues 84–104 (FLVASLACADFLVGLTVMPFS). Residues 105-121 (TVRSVEGCWYFGDTYCK) are Extracellular-facing. Residues 122–143 (FHSCFEGSFCYSSIFHLCFISV) form a helical membrane-spanning segment. Residues 144 to 166 (DRYIAVSDPLIYPTRFTASVSGK) lie on the Cytoplasmic side of the membrane. The chain crosses the membrane as a helical span at residues 167–187 (CITFSWLLSIIYSFSLLYTGA). At 188 to 212 (NEAGLEDLVSALTCVGGCQIAVNQS) the chain is on the extracellular side. Asn210 is a glycosylation site (N-linked (GlcNAc...) asparagine). Residues 213-233 (WVFINFLLFLVPTLVMMTVYS) form a helical membrane-spanning segment. Over 234-274 (KIFLIAKQQAQNIEKMSKQTTRASESYKDRVAKRERKAAKT) the chain is Cytoplasmic. A helical transmembrane segment spans residues 275–295 (LGIAVAAFLLSWLPYFIDSII). Over 296–309 (DAFLGFITPTYVYE) the chain is Extracellular. Residues 310 to 333 (ILVWIAYYNSAMNPLIYAFFYPWF) traverse the membrane as a helical segment. At 334-358 (RKAIKLIVTGKILRQNSSVTNLFPE) the chain is on the cytoplasmic side.

It belongs to the G-protein coupled receptor 1 family.

The protein localises to the cell membrane. Olfactory receptor specific for N,N-dimethylalkylamines trace amines. Trace amine compounds are enriched in animal body fluids and act on trace amine-associated receptors (TAARs) to elicit both intraspecific and interspecific innate behaviors. Ligand-binding causes a conformation change that triggers signaling via G(s)-class of G alpha proteins (GNAL or GNAS). The sequence is that of Trace amine-associated receptor 7a from Rattus norvegicus (Rat).